Consider the following 188-residue polypeptide: MEMMEEGVPDVINLSYLAEREETELEKRVAEIIKELGAERLMYCMQCGACASICPLARVGFEWYNKKLIKALILGLRDELLDDPTPWACVACNRCTEICPRRVSPFEVMFAMRRLMAEEYAIGSLAIEGLRSLYEYGHAVYMAGREARKKVGLPEKPPSTESDPKALEDLRKILKQTKLAELGLVPME.

2 4Fe-4S ferredoxin-type domains span residues 34–64 (KELG…FEWY) and 78–109 (DELL…FEVM). [4Fe-4S] cluster contacts are provided by Cys-44, Cys-47, Cys-50, Cys-54, Cys-89, Cys-92, Cys-95, and Cys-99.

This sequence belongs to the HdrC family. In terms of assembly, the heterodisulfide reductase is composed of three subunits; HdlA, HdlB and HdlC. It forms a complex with the F420-non-reducing hydrogenase (Mvh), which provides the reducing equivalents to the heterodisulfide reductase.

The protein localises to the cytoplasm. Has oxidoreductase activity. The Hdl and Mvh subunits may together mediate electron transfer from hydrogen to an unidentified electron acceptor on the cytoplasmic side of the membrane. The chain is Heterodisulfide reductase subunit C-like protein (hdlC) from Archaeoglobus profundus (strain DSM 5631 / JCM 9629 / NBRC 100127 / Av18).